The chain runs to 200 residues: Imidazoleglycerol-phosphate dehydratase (200 aa).

This sequence belongs to the imidazoleglycerol-phosphate dehydratase family.

The protein resides in the cytoplasm. It carries out the reaction D-erythro-1-(imidazol-4-yl)glycerol 3-phosphate = 3-(imidazol-4-yl)-2-oxopropyl phosphate + H2O. It functions in the pathway amino-acid biosynthesis; L-histidine biosynthesis; L-histidine from 5-phospho-alpha-D-ribose 1-diphosphate: step 6/9. In Prosthecochloris aestuarii (strain DSM 271 / SK 413), this protein is Imidazoleglycerol-phosphate dehydratase.